Consider the following 186-residue polypeptide: uncharacterized protein (186 aa).

Disordered regions lie at residues L17 to F47, E77 to A105, and Q121 to G164. Residues P90–A105 show a composition bias toward low complexity. Over residues P136–E149 the composition is skewed to acidic residues.

This is an uncharacterized protein from Homo sapiens (Human).